The sequence spans 1119 residues: Transcriptional repressor NF-X1 homolog (1119 aa).

Positions 1–214 (MADTEGTSSS…EPLTEEETKI (214 aa)) are disordered. The span at 7–17 (TSSSIPTSTNS) shows a compositional bias: low complexity. Residues 18-29 (SRHRASRGRGGR) are compositionally biased toward basic residues. A compositionally biased stretch (low complexity) spans 84–98 (ANFTFNPNAATFNPA). Residues 113-128 (GASTHSNQNSRQQEPS) are compositionally biased toward polar residues. Positions 143-154 (RQLEIQEQRGDS) are enriched in basic and acidic residues. Over residues 157 to 167 (QNQSRQNNRNQ) the composition is skewed to low complexity. A compositionally biased stretch (polar residues) spans 174-193 (ANQQNKSVQNPSRNPGNSRR). Residues 198 to 214 (RRREQKEEPLTEEETKI) show a composition bias toward basic and acidic residues. The segment at 235-287 (CAICYTRITTRQGVWSCKTCYHIFHISTGCITDWARSSRDKEGANTWRCPTCQ) adopts an RING-type; degenerate zinc-finger fold. 9 NF-X1-type zinc fingers span residues 330–348 (CPHP…ECKL), 383–402 (CGQH…ECTV), 439–458 (CGIH…ECET), 500–523 (CGTP…PCNL), 565–584 (CGMH…FCLQ), 592–611 (CGIH…PCLQ), 649–668 (CDHS…PCTQ), 703–726 (CGVH…KCTK), and 735–756 (CEHP…PCKA). The R3H domain occupies 867 to 937 (IDFVKSVEKI…KRSIVLTAVR (71 aa)). Disordered stretches follow at residues 1024–1047 (VDSD…PKDW) and 1078–1119 (AAKK…ELLE). Residues 1032 to 1041 (NVPTTSNLVS) show a composition bias toward polar residues. Over residues 1086-1097 (PTWEDQCDEDAP) the composition is skewed to acidic residues.

It belongs to the NFX1 family.

Its subcellular location is the nucleus. May play a role in transcription regulation. This is Transcriptional repressor NF-X1 homolog (nfx-1) from Caenorhabditis elegans.